The primary structure comprises 62 residues: uncharacterized protein (62 aa).

Positions 26–62 (YELATLYEAMQKENEEQIEQSKNKLERLRKEWIRLNG) form a coiled coil.

This is an uncharacterized protein from Bacillus subtilis (strain 168).